Reading from the N-terminus, the 209-residue chain is MTQASAKFIVVEGLEGAGKSSAIALIRDFIEKHTGLAPVCTREPGGTPLAERIRDLVKIADPSDPLCDESECLLIYAARAQLVANVIKPALAEGKWVLGDRHNLSSLAYQGGGRGLMPLVEAVSNATLKGFKPDLTLYLDLDPKLGLQRAAKRGELDRIEQQAIDFFERARATYLKLASEDEQIVVIDASQTMAEVHKDILAVLQAMAW.

ATP is bound at residue 13-20 (GLEGAGKS).

This sequence belongs to the thymidylate kinase family.

It carries out the reaction dTMP + ATP = dTDP + ADP. In terms of biological role, phosphorylation of dTMP to form dTDP in both de novo and salvage pathways of dTTP synthesis. The polypeptide is Thymidylate kinase (Shewanella sp. (strain MR-4)).